The sequence spans 221 residues: Putative N-acetylmannosamine-6-phosphate 2-epimerase (221 aa).

It belongs to the NanE family.

It catalyses the reaction an N-acyl-D-glucosamine 6-phosphate = an N-acyl-D-mannosamine 6-phosphate. It participates in amino-sugar metabolism; N-acetylneuraminate degradation; D-fructose 6-phosphate from N-acetylneuraminate: step 3/5. Its function is as follows. Converts N-acetylmannosamine-6-phosphate (ManNAc-6-P) to N-acetylglucosamine-6-phosphate (GlcNAc-6-P). The polypeptide is Putative N-acetylmannosamine-6-phosphate 2-epimerase (Clostridium perfringens (strain SM101 / Type A)).